The chain runs to 312 residues: Ribonuclease Z (312 aa).

His62, His64, Asp66, His67, His144, Asp215, and His273 together coordinate Zn(2+). Asp66 serves as the catalytic Proton acceptor.

This sequence belongs to the RNase Z family. As to quaternary structure, homodimer. Requires Zn(2+) as cofactor.

It carries out the reaction Endonucleolytic cleavage of RNA, removing extra 3' nucleotides from tRNA precursor, generating 3' termini of tRNAs. A 3'-hydroxy group is left at the tRNA terminus and a 5'-phosphoryl group is left at the trailer molecule.. Functionally, zinc phosphodiesterase, which displays some tRNA 3'-processing endonuclease activity. Probably involved in tRNA maturation, by removing a 3'-trailer from precursor tRNA. The polypeptide is Ribonuclease Z (Prochlorococcus marinus (strain MIT 9215)).